A 266-amino-acid polypeptide reads, in one-letter code: Gap junction beta-4 protein (266 aa).

The stretch at 2-13 (NWAFLQGLLSGV) is an intramembrane region. Over 14 to 20 (NKYSTVL) the chain is Cytoplasmic. A helical membrane pass occupies residues 21–40 (SRIWLSVVFIFRVLVYVVAA). At 41–73 (EEVWDDEQKDFVCNTKQPGCPNVCYDEFFPVSH) the chain is on the extracellular side. 3 cysteine pairs are disulfide-bonded: Cys53-Cys175, Cys60-Cys169, and Cys64-Cys164. The chain crosses the membrane as a helical span at residues 74–94 (VRLWALQLILVTCPSLLVVMH). The Cytoplasmic portion of the chain corresponds to 95–130 (VAYREERERKHHLKHGPNAPSLYDNLSKKRGGLWWT). The chain crosses the membrane as a helical span at residues 131–151 (YLLSLIFKAAVDAGFLYIFHR). Topologically, residues 152–184 (LYKDYDMPRVVACSVEPCPHTVDCYISRPTEKK) are extracellular. A helical membrane pass occupies residues 185–205 (VFTYFMVTTAAICILLNLSEV). At 206–266 (FYLVGKRCME…SAPVDAGGYP (61 aa)) the chain is on the cytoplasmic side.

The protein belongs to the connexin family. Beta-type (group I) subfamily. As to quaternary structure, a hemichannel or connexon is composed of a hexamer of connexins. A functional gap junction is formed by the apposition of two hemichannels. Forms heteromeric channels with GJB2.

The protein resides in the cell membrane. The protein localises to the cell junction. Its subcellular location is the gap junction. Functionally, structural component of gap junctions. Gap junctions are dodecameric channels that connect the cytoplasm of adjoining cells. They are formed by the docking of two hexameric hemichannels, one from each cell membrane. Small molecules and ions diffuse from one cell to a neighboring cell via the central pore. This is Gap junction beta-4 protein (GJB4) from Homo sapiens (Human).